The primary structure comprises 384 residues: Lipid-A-disaccharide synthase 1 (384 aa).

The protein belongs to the LpxB family.

The catalysed reaction is a lipid X + a UDP-2-N,3-O-bis[(3R)-3-hydroxyacyl]-alpha-D-glucosamine = a lipid A disaccharide + UDP + H(+). It functions in the pathway bacterial outer membrane biogenesis; LPS lipid A biosynthesis. In terms of biological role, condensation of UDP-2,3-diacylglucosamine and 2,3-diacylglucosamine-1-phosphate to form lipid A disaccharide, a precursor of lipid A, a phosphorylated glycolipid that anchors the lipopolysaccharide to the outer membrane of the cell. In Legionella pneumophila (strain Paris), this protein is Lipid-A-disaccharide synthase 1.